The primary structure comprises 297 residues: tRNA pseudouridine synthase B (297 aa).

Asp-44 (nucleophile) is an active-site residue.

This sequence belongs to the pseudouridine synthase TruB family. Type 1 subfamily.

The catalysed reaction is uridine(55) in tRNA = pseudouridine(55) in tRNA. Functionally, responsible for synthesis of pseudouridine from uracil-55 in the psi GC loop of transfer RNAs. The sequence is that of tRNA pseudouridine synthase B from Corynebacterium aurimucosum (strain ATCC 700975 / DSM 44827 / CIP 107346 / CN-1) (Corynebacterium nigricans).